The following is a 176-amino-acid chain: 2-C-methyl-D-erythritol 2,4-cyclodiphosphate synthase (176 aa).

Positions 22 and 24 each coordinate a divalent metal cation. 4-CDP-2-C-methyl-D-erythritol 2-phosphate contacts are provided by residues 22-24 (DVH) and 48-49 (HS). His56 provides a ligand contact to a divalent metal cation. 4-CDP-2-C-methyl-D-erythritol 2-phosphate-binding positions include 70-72 (DIG), 146-149 (TTSE), Phe153, and Arg156.

Belongs to the IspF family. Homotrimer. A divalent metal cation serves as cofactor.

It catalyses the reaction 4-CDP-2-C-methyl-D-erythritol 2-phosphate = 2-C-methyl-D-erythritol 2,4-cyclic diphosphate + CMP. It functions in the pathway isoprenoid biosynthesis; isopentenyl diphosphate biosynthesis via DXP pathway; isopentenyl diphosphate from 1-deoxy-D-xylulose 5-phosphate: step 4/6. In terms of biological role, involved in the biosynthesis of isopentenyl diphosphate (IPP) and dimethylallyl diphosphate (DMAPP), two major building blocks of isoprenoid compounds. Catalyzes the conversion of 4-diphosphocytidyl-2-C-methyl-D-erythritol 2-phosphate (CDP-ME2P) to 2-C-methyl-D-erythritol 2,4-cyclodiphosphate (ME-CPP) with a corresponding release of cytidine 5-monophosphate (CMP). The protein is 2-C-methyl-D-erythritol 2,4-cyclodiphosphate synthase of Xylella fastidiosa (strain 9a5c).